Consider the following 262-residue polypeptide: Nurim (262 aa).

The Nuclear segment spans residues 1–4 (MAPA). Residues 5–28 (LLLVPAALASFILAFGTGVEFVRF) form a helical membrane-spanning segment. Residues 29–58 (TSLRPLLGGIPESGGPDARQGWLAALQDRS) are Perinuclear space-facing. A helical transmembrane segment spans residues 59–80 (ILAPLAWDLGLLLLFVGQHSLM). At 81–97 (AAERVKAWTSRYFGVLQ) the chain is on the nuclear side. The helical transmembrane segment at 98-114 (RSLYVACTALALQLVMR) threads the bilayer. At 115–133 (YWEPIPKGPVLWEARAEPW) the chain is on the perinuclear space side. Residues 134–164 (ATWVPLLCFVLHVISWLLIFSILLVFDYAEL) form a helical membrane-spanning segment. Residues 165 to 191 (MGLKQVYYHVLGLGEPLALKSPRALRL) are Nuclear-facing. A helical membrane pass occupies residues 192-210 (FSHLRHPVCVELLTVLWVV). The Perinuclear space segment spans residues 211-216 (PTLGTD). A helical membrane pass occupies residues 217–234 (RLLLAFLLTLYLGLAHGL). The Nuclear segment spans residues 235–262 (DQQDLRYLRAQLQRKLHLLSRPQDGEAE).

The protein belongs to the nurim family.

It localises to the nucleus inner membrane. The polypeptide is Nurim (NRM) (Pan troglodytes (Chimpanzee)).